The sequence spans 273 residues: 4-hydroxy-tetrahydrodipicolinate reductase (273 aa).

NAD(+) is bound by residues 12-17 (GAGGRM) and E38. Residue R39 coordinates NADP(+). NAD(+)-binding positions include 102–104 (GTT) and 126–129 (AANF). The active-site Proton donor/acceptor is H159. H160 serves as a coordination point for (S)-2,3,4,5-tetrahydrodipicolinate. The active-site Proton donor is the K163. (S)-2,3,4,5-tetrahydrodipicolinate is bound at residue 169–170 (GT).

The protein belongs to the DapB family. Homotetramer.

It localises to the cytoplasm. It carries out the reaction (S)-2,3,4,5-tetrahydrodipicolinate + NAD(+) + H2O = (2S,4S)-4-hydroxy-2,3,4,5-tetrahydrodipicolinate + NADH + H(+). The enzyme catalyses (S)-2,3,4,5-tetrahydrodipicolinate + NADP(+) + H2O = (2S,4S)-4-hydroxy-2,3,4,5-tetrahydrodipicolinate + NADPH + H(+). The protein operates within amino-acid biosynthesis; L-lysine biosynthesis via DAP pathway; (S)-tetrahydrodipicolinate from L-aspartate: step 4/4. Functionally, catalyzes the conversion of 4-hydroxy-tetrahydrodipicolinate (HTPA) to tetrahydrodipicolinate. The protein is 4-hydroxy-tetrahydrodipicolinate reductase of Escherichia coli O127:H6 (strain E2348/69 / EPEC).